Reading from the N-terminus, the 885-residue chain is Alanine--tRNA ligase (885 aa).

Zn(2+)-binding residues include His-569, His-573, Cys-672, and His-676.

Belongs to the class-II aminoacyl-tRNA synthetase family. Requires Zn(2+) as cofactor.

It is found in the cytoplasm. The catalysed reaction is tRNA(Ala) + L-alanine + ATP = L-alanyl-tRNA(Ala) + AMP + diphosphate. Functionally, catalyzes the attachment of alanine to tRNA(Ala) in a two-step reaction: alanine is first activated by ATP to form Ala-AMP and then transferred to the acceptor end of tRNA(Ala). Also edits incorrectly charged Ser-tRNA(Ala) and Gly-tRNA(Ala) via its editing domain. This is Alanine--tRNA ligase from Chlorobaculum tepidum (strain ATCC 49652 / DSM 12025 / NBRC 103806 / TLS) (Chlorobium tepidum).